The primary structure comprises 315 residues: Ribosomal RNA small subunit methyltransferase H (315 aa).

Residues 36–38 (GGH), aspartate 56, phenylalanine 81, aspartate 103, and glutamine 110 each bind S-adenosyl-L-methionine.

The protein belongs to the methyltransferase superfamily. RsmH family.

Its subcellular location is the cytoplasm. The catalysed reaction is cytidine(1402) in 16S rRNA + S-adenosyl-L-methionine = N(4)-methylcytidine(1402) in 16S rRNA + S-adenosyl-L-homocysteine + H(+). Functionally, specifically methylates the N4 position of cytidine in position 1402 (C1402) of 16S rRNA. The chain is Ribosomal RNA small subunit methyltransferase H from Idiomarina loihiensis (strain ATCC BAA-735 / DSM 15497 / L2-TR).